Consider the following 372-residue polypeptide: Chaperone protein DnaJ (372 aa).

In terms of domain architecture, J spans 5–70 (DYYEVLGVSK…QKRAAYDQYG (66 aa)). A CR-type zinc finger spans residues 127 to 205 (GVTKEIRIPT…CHGHGRVERY (79 aa)). Cys-140, Cys-143, Cys-157, Cys-160, Cys-179, Cys-182, Cys-193, and Cys-196 together coordinate Zn(2+). CXXCXGXG motif repeat units follow at residues 140–147 (CDICHGSG), 157–164 (CSTCQGAG), 179–186 (CPHCHGRG), and 193–200 (CHKCHGHG).

Belongs to the DnaJ family. In terms of assembly, homodimer. The cofactor is Zn(2+).

It is found in the cytoplasm. Its function is as follows. Participates actively in the response to hyperosmotic and heat shock by preventing the aggregation of stress-denatured proteins and by disaggregating proteins, also in an autonomous, DnaK-independent fashion. Unfolded proteins bind initially to DnaJ; upon interaction with the DnaJ-bound protein, DnaK hydrolyzes its bound ATP, resulting in the formation of a stable complex. GrpE releases ADP from DnaK; ATP binding to DnaK triggers the release of the substrate protein, thus completing the reaction cycle. Several rounds of ATP-dependent interactions between DnaJ, DnaK and GrpE are required for fully efficient folding. Also involved, together with DnaK and GrpE, in the DNA replication of plasmids through activation of initiation proteins. The polypeptide is Chaperone protein DnaJ (Photorhabdus laumondii subsp. laumondii (strain DSM 15139 / CIP 105565 / TT01) (Photorhabdus luminescens subsp. laumondii)).